We begin with the raw amino-acid sequence, 211 residues long: Holliday junction branch migration complex subunit RuvA (211 aa).

Residues 1-70 (MIQFLQGQVV…QDQIALFGFG (70 aa)) are domain I. The interval 71 to 149 (RLAERDLFGQ…QWHKLQMGTG (79 aa)) is domain II. The interval 150–158 (ETDSTLPTT) is flexible linker. The segment at 158 to 211 (TALLEDLEMTLLALGYTQTEIQQAIAMVSQVPDVAQSEDPEVWIRQAIGWLSDH) is domain III.

It belongs to the RuvA family. In terms of assembly, homotetramer. Forms an RuvA(8)-RuvB(12)-Holliday junction (HJ) complex. HJ DNA is sandwiched between 2 RuvA tetramers; dsDNA enters through RuvA and exits via RuvB. An RuvB hexamer assembles on each DNA strand where it exits the tetramer. Each RuvB hexamer is contacted by two RuvA subunits (via domain III) on 2 adjacent RuvB subunits; this complex drives branch migration. In the full resolvosome a probable DNA-RuvA(4)-RuvB(12)-RuvC(2) complex forms which resolves the HJ.

It localises to the cytoplasm. In terms of biological role, the RuvA-RuvB-RuvC complex processes Holliday junction (HJ) DNA during genetic recombination and DNA repair, while the RuvA-RuvB complex plays an important role in the rescue of blocked DNA replication forks via replication fork reversal (RFR). RuvA specifically binds to HJ cruciform DNA, conferring on it an open structure. The RuvB hexamer acts as an ATP-dependent pump, pulling dsDNA into and through the RuvAB complex. HJ branch migration allows RuvC to scan DNA until it finds its consensus sequence, where it cleaves and resolves the cruciform DNA. The sequence is that of Holliday junction branch migration complex subunit RuvA from Synechocystis sp. (strain ATCC 27184 / PCC 6803 / Kazusa).